The sequence spans 523 residues: Heparanase (523 aa).

The first 18 residues, 1 to 18, serve as a signal peptide directing secretion; sequence MLVLLLLVLLLAVPPRRT. Heparan sulfate group contacts are provided by residues 42–44, Thr-77, and 137–141; these read DAS and KKHKN. Asn-141 and Asn-196 each carry an N-linked (GlcNAc...) asparagine glycan. The active-site Proton donor is Glu-204. Heparan sulfate group is bound by residues 250 to 260, His-276, and Arg-283; that span reads QPRKHTQHLLR. The required for heterodimerization with the heparanase 8 kDa subunit stretch occupies residues 268–397; that stretch reads KAIDSVTWHH…LLYKRLVGTR (130 aa). Glu-323 (nucleophile) is an active-site residue. Residues 328–330 and 369–371 each bind heparan sulfate group; these read YGG and GSY. Cys-417 and Cys-522 are joined by a disulfide. N-linked (GlcNAc...) asparagine glycosylation is found at Asn-436 and Asn-439. The required for transferring proheparanase to the Golgi apparatus, secretion and subsequent enzyme activity and for enhancement of PKB/AKT1 phosphorylation stretch occupies residues 507 to 523; it reads FSYGFYVIRNAKAIACI.

It belongs to the glycosyl hydrolase 79 family. Heterodimer; the active enzyme is a heterodimer of the 60 kDa and 45 kDa proteolytic products. Post-translationally, N-glycosylated. In terms of processing, proteolytically cleaved to produce a 60 kDa and a 45 kDa product.

Its subcellular location is the secreted. It catalyses the reaction endohydrolysis of (1-&gt;4)-beta-D-glycosidic bonds of heparan sulfate chains in heparan sulfate proteoglycan.. Endoglycosidase that cleaves heparan sulfate proteoglycans (HSPGs) into heparan sulfate side chains and core proteoglycans. Participates in extracellular matrix (ECM) degradation and remodeling. Selectively cleaves the linkage between a glucuronic acid unit and an N-sulfo glucosamine unit carrying either a 3-O-sulfo or a 6-O-sulfo group. Can also cleave the linkage between a glucuronic acid unit and an N-sulfo glucosamine unit carrying a 2-O-sulfo group, but not linkages between a glucuronic acid unit and a 2-O-sulfated iduronic acid moiety. Increases cell adhesion to the extracellular matrix (ECM), independent of its enzymatic activity. This Gallus gallus (Chicken) protein is Heparanase (HPSE).